Consider the following 551-residue polypeptide: Protein ROOT HAIR SPECIFIC 17 (551 aa).

Residues 39–59 (LFPLVSAVSGCLLLILFSFST) form a helical; Signal-anchor for type II membrane protein membrane-spanning segment. N-linked (GlcNAc...) asparagine glycans are attached at residues N109 and N153. 293-295 (HLR) is a binding site for substrate. 2 N-linked (GlcNAc...) asparagine glycosylation sites follow: N405 and N465. Residues 515 to 539 (KAKHVNEDDSSEYSEIGNVPISSRS) form a disordered region.

Belongs to the glycosyltransferase GT106 family. In terms of tissue distribution, specifically expressed in the root hair.

Its subcellular location is the membrane. It participates in glycan metabolism. The protein is Protein ROOT HAIR SPECIFIC 17 of Arabidopsis thaliana (Mouse-ear cress).